A 550-amino-acid chain; its full sequence is Transcriptional repressor RHIT (550 aa).

Disordered stretches follow at residues 1 to 67 (MSAD…ETRA), 174 to 200 (VQGK…VVEV), and 216 to 296 (KSFK…EGLA). 3 stretches are compositionally biased toward basic and acidic residues: residues 11-22 (AQDKERARETPG), 45-58 (ESPH…EPHP), and 187-200 (LGHE…VVEV). Residues 124–193 (VTFEDMALYL…SRQLGHEEEE (70 aa)) enclose the KRAB domain. K216 participates in a covalent cross-link: Glycyl lysine isopeptide (Lys-Gly) (interchain with G-Cter in SUMO2). Positions 267-281 (DLPKTQEGHFPEQPR) are enriched in basic and acidic residues. S290 carries the post-translational modification Phosphoserine. C2H2-type zinc fingers lie at residues 306–328 (YKCE…RRTH), 334–356 (YACT…QIIH), 362–384 (YTCP…QRIH), 390–412 (YVCD…QGTH), 418–440 (HKCP…QRTH), 446–468 (YPCP…NRTH), 474–496 (YHCL…QRTH), and 502–524 (YSCP…EKIH).

This sequence belongs to the krueppel C2H2-type zinc-finger protein family.

The protein resides in the nucleus. Transcriptional repressor involved in regulating MPV17L expression. By regulating MPV17L expression, contributes to the regulation of genes involved in H(2)O(2) metabolism and the mitochondrial apoptotic cascade. This Bos taurus (Bovine) protein is Transcriptional repressor RHIT (ZNF205).